A 221-amino-acid chain; its full sequence is ATP phosphoribosyltransferase (221 aa).

This sequence belongs to the ATP phosphoribosyltransferase family. Short subfamily. In terms of assembly, heteromultimer composed of HisG and HisZ subunits.

It is found in the cytoplasm. The enzyme catalyses 1-(5-phospho-beta-D-ribosyl)-ATP + diphosphate = 5-phospho-alpha-D-ribose 1-diphosphate + ATP. Its pathway is amino-acid biosynthesis; L-histidine biosynthesis; L-histidine from 5-phospho-alpha-D-ribose 1-diphosphate: step 1/9. Its function is as follows. Catalyzes the condensation of ATP and 5-phosphoribose 1-diphosphate to form N'-(5'-phosphoribosyl)-ATP (PR-ATP). Has a crucial role in the pathway because the rate of histidine biosynthesis seems to be controlled primarily by regulation of HisG enzymatic activity. In Symbiobacterium thermophilum (strain DSM 24528 / JCM 14929 / IAM 14863 / T), this protein is ATP phosphoribosyltransferase.